A 318-amino-acid chain; its full sequence is Lymphatic vessel endothelial hyaluronic acid receptor 1 (318 aa).

The signal sequence occupies residues methionine 1–glycine 23. The Extracellular portion of the chain corresponds to alanine 24–threonine 234. The Link domain maps to glycine 39–asparagine 129. Residue asparagine 52 is glycosylated (N-linked (GlcNAc...) asparagine). 2 disulfide bridges follow: cysteine 60/cysteine 127 and cysteine 84/cysteine 105. Asparagine 129 carries N-linked (GlcNAc...) asparagine glycosylation. The helical transmembrane segment at alanine 235 to valine 255 threads the bilayer. The Cytoplasmic segment spans residues lysine 256–valine 318. The segment covering alanine 284–serine 305 has biased composition (basic and acidic residues). The interval alanine 284–valine 318 is disordered.

As to quaternary structure, homodimer; disulfide-linked. Interacts with PDGFB and IGFBP3. Forms a transient ternary complex with PDGFB and PDGFRB in TGN. O-glycosylated.

The protein localises to the membrane. In terms of biological role, ligand-specific transporter trafficking between intracellular organelles (TGN) and the plasma membrane. Plays a role in autocrine regulation of cell growth mediated by growth regulators containing cell surface retention sequence binding (CRS). May act as a hyaluronan (HA) transporter, either mediating its uptake for catabolism within lymphatic endothelial cells themselves, or its transport into the lumen of afferent lymphatic vessels for subsequent re-uptake and degradation in lymph nodes. Binds to pericelluar hyaluronan matrices deposited on the surface of leukocytes and facilitates cell adhesion and migration through lymphatic endothelium. In Mus musculus (Mouse), this protein is Lymphatic vessel endothelial hyaluronic acid receptor 1 (Lyve1).